An 85-amino-acid polypeptide reads, in one-letter code: MNERGRKRVLLGTVVSNKMDKSVVVEVERLVQHRVYKKYITSHKKYAAHDETQLCQIGDMVKITESRPLSKTKRFRVSEIVKKAV.

This sequence belongs to the universal ribosomal protein uS17 family. As to quaternary structure, part of the 30S ribosomal subunit.

One of the primary rRNA binding proteins, it binds specifically to the 5'-end of 16S ribosomal RNA. The chain is Small ribosomal subunit protein uS17 from Desulforapulum autotrophicum (strain ATCC 43914 / DSM 3382 / VKM B-1955 / HRM2) (Desulfobacterium autotrophicum).